The chain runs to 78 residues: Large ribosomal subunit protein bL28 (78 aa).

This sequence belongs to the bacterial ribosomal protein bL28 family.

This chain is Large ribosomal subunit protein bL28, found in Klebsiella pneumoniae (strain 342).